The chain runs to 127 residues: Large ribosomal subunit protein uL22 (127 aa).

It belongs to the universal ribosomal protein uL22 family. Part of the 50S ribosomal subunit.

Its function is as follows. This protein binds specifically to 23S rRNA; its binding is stimulated by other ribosomal proteins, e.g. L4, L17, and L20. It is important during the early stages of 50S assembly. It makes multiple contacts with different domains of the 23S rRNA in the assembled 50S subunit and ribosome. Functionally, the globular domain of the protein is located near the polypeptide exit tunnel on the outside of the subunit, while an extended beta-hairpin is found that lines the wall of the exit tunnel in the center of the 70S ribosome. The polypeptide is Large ribosomal subunit protein uL22 (Brucella suis (strain ATCC 23445 / NCTC 10510)).